The sequence spans 434 residues: MEVRPKESWNHADFVHCEDTESVPGKPSVNADEEVGGPQICRVCGDKATGYHFNVMTCEGCKGFFRRAMKRNARLRCPFRKGACEITRKTRRQCQACRLRKCLESGMKKEMIMSDEAVEERRALIKRKKSERTGTQPLGVQGLTEEQRMMIRELMDAQMKTFDTTFSHFKNFRLPGVLSSGCELPESLQAPSREEAAKWSQVRKDLCSLKVSLQLRGEDGSVWNYKPPADSGGKEIFSLLPHMADMSTYMFKGIISFAKVISYFRDLPIEDQISLLKGAAFELCQLRFNTVFNAETGTWECGRLSYCLEDTAGGFQQLLLEPMLKFHYMLKKLQLHEEEYVLMQAISLFSPDRPGVLQHRVVDQLQEQFAITLKSYIECNRPQPAHRFLFLKIMAMLTELRSINAQHTQRLLRIQDIHPFATPLMQELFGITGS.

A DNA-binding region (nuclear receptor) is located at residues 38–107; sequence PQICRVCGDK…RLRKCLESGM (70 aa). 2 consecutive NR C4-type zinc fingers follow at residues 41-61 and 77-102; these read CRVC…CEGC and CPFR…LRKC. The Bipartite nuclear localization signal signature appears at 66–92; the sequence is RRAMKRNARLRCPFRKGACEITRKTRR. The tract at residues 108 to 145 is hinge; the sequence is KKEMIMSDEAVEERRALIKRKKSERTGTQPLGVQGLTE. In terms of domain architecture, NR LBD spans 146–433; sequence EQRMMIRELM…LMQELFGITG (288 aa). Hyperforin contacts are provided by residues S247, 285–288, and H407; that span reads QLRF.

Belongs to the nuclear hormone receptor family. NR1 subfamily. As to quaternary structure, heterodimer with RXR. Interacts with NCOA1. Interacts (via domain NR LBD) with CRY1 and CRY2 in a ligand-dependent manner. In terms of tissue distribution, expressed in liver, colon and small intestine.

The protein localises to the nucleus. Its function is as follows. Nuclear receptor that binds and is activated by variety of endogenous and xenobiotic compounds. Transcription factor that activates the transcription of multiple genes involved in the metabolism and secretion of potentially harmful xenobiotics, drugs and endogenous compounds. Activated by the antibiotic rifampicin and various plant metabolites, such as hyperforin, guggulipid, colupulone, and isoflavones. Response to specific ligands is species-specific. Activated by naturally occurring steroids, such as pregnenolone and progesterone. Binds to a response element in the promoters of the CYP3A4 and ABCB1/MDR1 genes. The chain is Nuclear receptor subfamily 1 group I member 2 (NR1I2) from Homo sapiens (Human).